A 184-amino-acid polypeptide reads, in one-letter code: mRNA transport regulator MTR2 (184 aa).

The segment at 111–135 (KMGQDATVPIQPNNTGNRNRPNDMN) is disordered. The segment covering 120–129 (IQPNNTGNRN) has biased composition (polar residues). The residue at position 125 (T125) is a Phosphothreonine.

As to quaternary structure, interacts with MEX67.

It is found in the nucleus. Affects mRNA transport from the nucleus to the cytoplasm. This Saccharomyces cerevisiae (strain ATCC 204508 / S288c) (Baker's yeast) protein is mRNA transport regulator MTR2 (MTR2).